The following is a 170-amino-acid chain: 3-hydroxyacyl-[acyl-carrier-protein] dehydratase FabZ (170 aa).

His66 is a catalytic residue.

This sequence belongs to the thioester dehydratase family. FabZ subfamily.

The protein resides in the cytoplasm. The enzyme catalyses a (3R)-hydroxyacyl-[ACP] = a (2E)-enoyl-[ACP] + H2O. Involved in unsaturated fatty acids biosynthesis. Catalyzes the dehydration of short chain beta-hydroxyacyl-ACPs and long chain saturated and unsaturated beta-hydroxyacyl-ACPs. This Granulibacter bethesdensis (strain ATCC BAA-1260 / CGDNIH1) protein is 3-hydroxyacyl-[acyl-carrier-protein] dehydratase FabZ.